A 201-amino-acid polypeptide reads, in one-letter code: Large ribosomal subunit protein uL4 (201 aa).

Residues 43-71 form a disordered region; that stretch reads TRAQKTRSDVSGGGKKPWRQKGTGRARSG.

The protein belongs to the universal ribosomal protein uL4 family. As to quaternary structure, part of the 50S ribosomal subunit.

Functionally, one of the primary rRNA binding proteins, this protein initially binds near the 5'-end of the 23S rRNA. It is important during the early stages of 50S assembly. It makes multiple contacts with different domains of the 23S rRNA in the assembled 50S subunit and ribosome. Its function is as follows. Forms part of the polypeptide exit tunnel. The chain is Large ribosomal subunit protein uL4 from Psychromonas ingrahamii (strain DSM 17664 / CCUG 51855 / 37).